The following is a 403-amino-acid chain: Metacaspase-1A (403 aa).

The interval methionine 1–histidine 93 is disordered. Positions glycine 18–proline 31 are enriched in low complexity. Over residues serine 32–serine 55 the composition is skewed to pro residues. Catalysis depends on residues histidine 194 and cysteine 250.

Belongs to the peptidase C14B family.

Its function is as follows. Involved in cell death (apoptosis). The protein is Metacaspase-1A (casA) of Aspergillus terreus (strain NIH 2624 / FGSC A1156).